A 1271-amino-acid polypeptide reads, in one-letter code: Protein flightless-1 homolog (1271 aa).

M1 carries the N-acetylmethionine modification. Residues 1 to 427 (MEATGVLPFV…SGSKDPLARK (427 aa)) are interaction with LRRFIP1 and LRRFIP2. LRR repeat units lie at residues 7-32 (LPFV…VKAM), 33-55 (TSLR…LAAL), 56-78 (QKLE…LSSL), 80-103 (SLRA…IFKL), 104-126 (DDLS…LENA), 127-149 (KNML…LFIN), 150-173 (LTDL…MRRL), 175-196 (HLQT…QLPA), 197-222 (MMAL…LEGL), 223-245 (SNLS…LYTL), 247-268 (SLRR…IDQW), 269-291 (VHLE…ICKL), 293-316 (KLKK…IGKL), 317-339 (TSLE…LCRC), 340-363 (PKLK…HFLT), and 365-385 (IQVL…PADR). K21 carries the post-translational modification N6-acetyllysine. S406 is subject to Phosphoserine. S436 is subject to Phosphoserine; by SGK3. An interaction with ACTL6A region spans residues 495-827 (VGQLPGLTIW…VVSRSLEGTE (333 aa)). Gelsolin-like repeat units lie at residues 509-591 (FVPV…EEFL), 629-703 (NIKL…PGFW), and 759-831 (LMPG…AQVF). Phosphoserine is present on S860. The disordered stretch occupies residues 951-977 (KTEDKEGKASAEAREGEEAAAEAEEKQ). Residues 952–967 (TEDKEGKASAEAREGE) show a composition bias toward basic and acidic residues. The span at 968–977 (EAAAEAEEKQ) shows a compositional bias: acidic residues. A Gelsolin-like 4 repeat occupies 1183 to 1256 (KCSDFCQDDL…VRKGNEQRAF (74 aa)).

Interacts with actin, ACTL6A and NCOA2. Interacts with CARM1. Interacts with LRRFIP1, LRRFIP2 and MYD88. Upon LPS stimulation, LRRFIP2 competes for MYD88-binding; LRRFIP1 constitutively blocks the interaction with MyD88, even in the absence of LPS. Interacts with the nuclear receptors ESR1 and THRB. Interacts with SGK3. Interacts (via the gelsolin-like region) with TMOD1 and TMOD3. Interacts with LMOD2, VCL, GSN and DES. Expressed in blastocyst.

The protein localises to the nucleus. The protein resides in the cytoplasm. Its subcellular location is the cytoskeleton. It localises to the microtubule organizing center. It is found in the centrosome. The protein localises to the cell junction. The protein resides in the focal adhesion. Its subcellular location is the cell projection. It localises to the podosome. Is a regulator of actin polymerization, required for proper myofibril organization and regulation of the length of sarcomeric thin filaments. It also plays a role in the assembly of cardiomyocyte cell adhesion complexes. Regulates cytoskeletal rearrangements involved in cytokinesis and cell migration, by inhibiting Rac1-dependent paxillin phosphorylation. May play a role as coactivator in transcriptional activation by hormone-activated nuclear receptors (NR) and acts in cooperation with NCOA2 and CARM1. Involved in estrogen hormone signaling. This Mus musculus (Mouse) protein is Protein flightless-1 homolog (Flii).